A 285-amino-acid chain; its full sequence is Alpha-acetolactate decarboxylase (285 aa).

Residues 1–25 (MKKNIITSITSLALVAGLSLTAFAA) form the signal peptide.

The protein belongs to the alpha-acetolactate decarboxylase family.

The catalysed reaction is (2S)-2-acetolactate + H(+) = (R)-acetoin + CO2. It participates in polyol metabolism; (R,R)-butane-2,3-diol biosynthesis; (R,R)-butane-2,3-diol from pyruvate: step 2/3. Functionally, converts acetolactate into acetoin, which can be excreted by the cells. This may be a mechanism for controlling the internal pH of cells in the stationary stage. In Brevibacillus brevis (Bacillus brevis), this protein is Alpha-acetolactate decarboxylase (aldB).